The chain runs to 321 residues: Calcium-regulated beta-propeller protein CarP (321 aa).

The first 42 residues, Met1–Arg42, serve as a signal peptide directing secretion.

The protein belongs to the YjiK family.

It is found in the cell inner membrane. Plays a role in intracellular Ca(2+) homeostasis. Involved in modulating Ca(2+)-induced swarming motility and pyocyanine production. Plays a role in regulating virulence in a Ca(2+)-dependent manner. Involved in cell protection against oxidative stress in the presence of elevated Ca(2+). The chain is Calcium-regulated beta-propeller protein CarP from Pseudomonas aeruginosa (strain ATCC 15692 / DSM 22644 / CIP 104116 / JCM 14847 / LMG 12228 / 1C / PRS 101 / PAO1).